We begin with the raw amino-acid sequence, 239 residues long: 1-(5-phosphoribosyl)-5-[(5-phosphoribosylamino)methylideneamino] imidazole-4-carboxamide isomerase (239 aa).

Catalysis depends on Asp9, which acts as the Proton acceptor. Asp131 functions as the Proton donor in the catalytic mechanism.

This sequence belongs to the HisA/HisF family.

Its subcellular location is the cytoplasm. The enzyme catalyses 1-(5-phospho-beta-D-ribosyl)-5-[(5-phospho-beta-D-ribosylamino)methylideneamino]imidazole-4-carboxamide = 5-[(5-phospho-1-deoxy-D-ribulos-1-ylimino)methylamino]-1-(5-phospho-beta-D-ribosyl)imidazole-4-carboxamide. It functions in the pathway amino-acid biosynthesis; L-histidine biosynthesis; L-histidine from 5-phospho-alpha-D-ribose 1-diphosphate: step 4/9. The sequence is that of 1-(5-phosphoribosyl)-5-[(5-phosphoribosylamino)methylideneamino] imidazole-4-carboxamide isomerase from Bacteroides fragilis (strain YCH46).